The chain runs to 635 residues: MARSVRRTTLALLLSAVLAMTLFVTAPAHAQDSTWTVSGPSARSGPQARLQLDATTGALTLQVSRGGRTVLEPSPLGIRTEGADLSRGLRLSGRERRVVAERYRTAVGKQRSRDVRMTETRFRFRGDGGARFDLVVRVSDDGVAYRYVLPKGSGDVLGETSAFTLPTDATAWLGAYRRDNENLFNQYPAATAPTGEYMAQALFETRGTYALIAESDLSGRYSAARLIHEAGLPTYRIGLWDERVTSDGALSTPWRALVVGDLATVTESTFTDDLAPASRVADTSWIRPGPALWTWLAGGKPAGQSLSMQKGYVDYAAQRGWPYVVVDAGWYFDPDQWDVTDPDWQTNSWIPELVTYARERGVGIQVWIHHRDLDTAEEREQWLPTLERWGVKGVKIDFMDSESQDTLRWYDEILPATAAHHLLVNFHGSTIPKGIQRTWPHVMTMEGVNGEEKRVNTAQHLTTLPFTRNVIGSMDFTPGAFHRPQRPNAASDAGELGLSVLYESGIQNLAGTPESYDARPLARGFLEQLPAAWDRTRLLAGRPGESAVLARASGGRWFIGGTFAGAAHTAEVPLRLGSGTWLVDLVLDGPDGLVREPRVVRGGDTLSVPVVADGGFAAIACHWRPGRTSCDRTAA.

The N-terminal stretch at 1–30 (MARSVRRTTLALLLSAVLAMTLFVTAPAHA) is a signal peptide. Asp-179 provides a ligand contact to Ca(2+). Asp-397 serves as the catalytic Nucleophile. The Ca(2+) site is built by Glu-446 and Glu-452. Glu-452 functions as the Proton donor/acceptor in the catalytic mechanism.

It belongs to the glycosyl hydrolase 97 family. Requires Ca(2+) as cofactor.

The enzyme catalyses Hydrolysis of terminal, non-reducing alpha-D-galactose residues in alpha-D-galactosides, including galactose oligosaccharides, galactomannans and galactolipids.. This is Probable retaining alpha-galactosidase from Streptomyces bingchenggensis (strain BCW-1).